Reading from the N-terminus, the 567-residue chain is Putative laccase-17 (567 aa).

The N-terminal stretch at 1–22 is a signal peptide; that stretch reads MPSRGCSCWLLSLALLCSLAAA. 2 Plastocyanin-like domains span residues 30-146 and 158-310; these read VIRE…PRDG and ELAP…YGAA. An N-linked (GlcNAc...) asparagine glycan is attached at Asn76. Residues His80, His82, His125, and His127 each coordinate Cu cation. Asn187, Asn241, Asn298, Asn312, Asn327, Asn365, Asn368, Asn378, Asn388, and Asn430 each carry an N-linked (GlcNAc...) asparagine glycan. The Plastocyanin-like 3 domain occupies 415–551; the sequence is DFPANPPVQF…AMAFLVDDGV (137 aa). Positions 468, 471, 473, 530, 531, 532, and 536 each coordinate Cu cation.

Belongs to the multicopper oxidase family. Requires Cu cation as cofactor.

Its subcellular location is the secreted. It is found in the extracellular space. It localises to the apoplast. The enzyme catalyses 4 hydroquinone + O2 = 4 benzosemiquinone + 2 H2O. Functionally, lignin degradation and detoxification of lignin-derived products. This is Putative laccase-17 (LAC17) from Oryza sativa subsp. japonica (Rice).